We begin with the raw amino-acid sequence, 328 residues long: UPF0252 protein PF0978 (328 aa).

A helical transmembrane segment spans residues 3-23 (VPLLILLFLVLTSGCIAPSTP).

Belongs to the UPF0252 family.

The protein localises to the membrane. This is UPF0252 protein PF0978 from Pyrococcus furiosus (strain ATCC 43587 / DSM 3638 / JCM 8422 / Vc1).